Reading from the N-terminus, the 314-residue chain is Thymidylate synthase (314 aa).

Residues R21 and 176–177 (RR) each bind dUMP. The Nucleophile role is filled by C196. DUMP contacts are provided by residues 216–219 (RSAD), N227, and 257–259 (HLY). D219 lines the (6R)-5,10-methylene-5,6,7,8-tetrahydrofolate pocket. S313 is a binding site for (6R)-5,10-methylene-5,6,7,8-tetrahydrofolate.

It belongs to the thymidylate synthase family. Bacterial-type ThyA subfamily. In terms of assembly, homodimer.

The protein localises to the cytoplasm. The enzyme catalyses dUMP + (6R)-5,10-methylene-5,6,7,8-tetrahydrofolate = 7,8-dihydrofolate + dTMP. It participates in pyrimidine metabolism; dTTP biosynthesis. Its function is as follows. Catalyzes the reductive methylation of 2'-deoxyuridine-5'-monophosphate (dUMP) to 2'-deoxythymidine-5'-monophosphate (dTMP) while utilizing 5,10-methylenetetrahydrofolate (mTHF) as the methyl donor and reductant in the reaction, yielding dihydrofolate (DHF) as a by-product. This enzymatic reaction provides an intracellular de novo source of dTMP, an essential precursor for DNA biosynthesis. This Listeria innocua serovar 6a (strain ATCC BAA-680 / CLIP 11262) protein is Thymidylate synthase.